The following is a 276-amino-acid chain: Secretagogin (276 aa).

EF-hand domains follow at residues 12 to 47, 58 to 93, 105 to 140, 149 to 184, 197 to 232, and 240 to 276; these read LDAA…MLMK, NLHK…EDEN, DSSV…LFLH, KLEE…QENF, ERKR…MMEL, and VDLD…KINP. Positions 25, 27, 31, 36, 71, 73, 75, 77, 82, 118, 120, 122, 129, 162, 164, 166, 168, 173, 210, 212, 214, 221, 254, 256, 258, 260, and 265 each coordinate Ca(2+).

As to expression, expressed at high levels in the pancreatic islets of Langerhans and to a much lesser extent in the gastrointestinal tract (stomach, small intestine and colon), the adrenal medulla and cortex and the thyroid C-cells. In the brain, the expression is restricted to distinct subtypes of neurons with highest expression in the molecular layer of the cerebellum (stellate and basket cells), in the anterior part of the pituitary gland, in the thalamus, in the hypothalamus and in a subgroup of neocortical neurons.

Its subcellular location is the cytoplasm. The protein localises to the secreted. It is found in the cytoplasmic vesicle. It localises to the secretory vesicle membrane. This chain is Secretagogin (SCGN), found in Homo sapiens (Human).